The following is a 144-amino-acid chain: Complexin-1 (144 aa).

The span at 1-10 (MVSFLGGGLL) shows a compositional bias: gly residues. Positions 1–119 (MVSFLGGGLL…SGFPKNLDDL (119 aa)) are disordered. Composition is skewed to basic and acidic residues over residues 18–27 (LEEKEDKKEG) and 36–86 (AEAK…EGRL). A coiled-coil region spans residues 29–67 (EEEDPEIAEAKREAEEKRNEKYRKMEEEREVMRQGIRDK). Residues 103–112 (LQSSAQSSGF) show a composition bias toward polar residues. C141 bears the Cysteine methyl ester mark. C141 carries S-farnesyl cysteine lipidation. A propeptide spans 142–144 (NLQ) (removed in mature form).

Belongs to the complexin/synaphin family. As to quaternary structure, binds to the SNARE core complex containing SNAP25, synaptobrevin and syntaxin-1. In terms of tissue distribution, expressed in a subset of neurons in the central nervous system, including large serotoninergic Retzius neurons and pressure-sensitive P cells.

The protein localises to the membrane. Its function is as follows. Positively regulates a late step in synaptic vesicle exocytosis. The sequence is that of Complexin-1 (cpx1) from Hirudo medicinalis (Medicinal leech).